Consider the following 365-residue polypeptide: Chorismate synthase (365 aa).

Position 48 (Arg-48) interacts with NADP(+). Residues 125–127 (RGS), Gly-286, 301–305 (KPTPS), and Arg-328 each bind FMN.

The protein belongs to the chorismate synthase family. FMNH2 is required as a cofactor.

It catalyses the reaction 5-O-(1-carboxyvinyl)-3-phosphoshikimate = chorismate + phosphate. Its pathway is metabolic intermediate biosynthesis; chorismate biosynthesis; chorismate from D-erythrose 4-phosphate and phosphoenolpyruvate: step 7/7. Its function is as follows. Catalyzes the anti-1,4-elimination of the C-3 phosphate and the C-6 proR hydrogen from 5-enolpyruvylshikimate-3-phosphate (EPSP) to yield chorismate, which is the branch point compound that serves as the starting substrate for the three terminal pathways of aromatic amino acid biosynthesis. This reaction introduces a second double bond into the aromatic ring system. In Methanosphaera stadtmanae (strain ATCC 43021 / DSM 3091 / JCM 11832 / MCB-3), this protein is Chorismate synthase.